A 472-amino-acid polypeptide reads, in one-letter code: Type I restriction enzyme BthVORF4518P methylase subunit (472 aa).

S-adenosyl-L-methionine is bound by residues 151-156 (QYFTPR), 181-183 (TGG), aspartate 214, and 243-244 (DS).

Belongs to the N(4)/N(6)-methyltransferase family. As to quaternary structure, the type I restriction/modification system is composed of three polypeptides R, M and S; the restriction enzyme has stoichiometry R(2)M(2)S(1) while the methyltransferase is M(2)S(1).

It catalyses the reaction a 2'-deoxyadenosine in DNA + S-adenosyl-L-methionine = an N(6)-methyl-2'-deoxyadenosine in DNA + S-adenosyl-L-homocysteine + H(+). Its function is as follows. The subtype gamma methyltransferase (M) subunit of a type I restriction enzyme. The M and S subunits together form a methyltransferase (MTase) that methylates two adenine residues of an undetermined sequence. In the presence of the R subunit the complex can also act as an endonuclease, binding to the same target sequence but cutting the DNA some distance from this site. Whether the DNA is cut or modified depends on the methylation state of the target sequence. When the target site is unmodified, the DNA is cut. When the target site is hemimethylated, the complex acts as a maintenance MTase modifying the DNA so that both strands become methylated. After locating a non-methylated recognition site, the enzyme complex serves as a molecular motor that translocates DNA in an ATP-dependent manner until a collision occurs that triggers cleavage. This is Type I restriction enzyme BthVORF4518P methylase subunit from Bacteroides thetaiotaomicron (strain ATCC 29148 / DSM 2079 / JCM 5827 / CCUG 10774 / NCTC 10582 / VPI-5482 / E50).